The chain runs to 69 residues: U2-agatoxin-Ao1c (69 aa).

The N-terminal stretch at 1–20 is a signal peptide; it reads MKAIISLLLISAMVFSMIEA. A propeptide spanning residues 21–34 is cleaved from the precursor; sequence VPVEEGLQLFEGER. 3 cysteine pairs are disulfide-bonded: cysteine 36/cysteine 52, cysteine 43/cysteine 57, and cysteine 51/cysteine 67. At leucine 68 the chain carries Leucine amide.

The protein belongs to the neurotoxin 01 (U2-agtx) family. Expressed by the venom gland.

It is found in the secreted. Functionally, insect active toxin causing rapid but reversible paralysis in crickets. No activity shown in mammals. Does not show effect on mammalian voltage-gated calcium channels. The chain is U2-agatoxin-Ao1c from Agelena orientalis (Funnel-web spider).